The following is a 439-amino-acid chain: Xaa-Pro dipeptidase (439 aa).

Residues D244, D255, H335, E380, and E419 each contribute to the Mn(2+) site.

The protein belongs to the peptidase M24B family. Bacterial-type prolidase subfamily. Mn(2+) serves as cofactor.

It catalyses the reaction Xaa-L-Pro dipeptide + H2O = an L-alpha-amino acid + L-proline. Functionally, splits dipeptides with a prolyl residue in the C-terminal position. The protein is Xaa-Pro dipeptidase of Shewanella woodyi (strain ATCC 51908 / MS32).